The following is a 161-amino-acid chain: Putative defense protein 2 (161 aa).

The N-terminal stretch at 1–11 is a signal peptide; that stretch reads LSWSALALTSA. Positions 12-161 constitute a Reelin domain; sequence YPTGAPTSAC…SAPVKILSHH (150 aa). Cysteine 21 and cysteine 98 form a disulfide bridge. An N-linked (GlcNAc...) asparagine glycan is attached at asparagine 91.

It belongs to the insect defense protein family.

It localises to the secreted. May have antimicrobial activity. This Antheraea mylitta (Tasar silkworm) protein is Putative defense protein 2.